A 96-amino-acid polypeptide reads, in one-letter code: Co-chaperonin GroES (96 aa).

This sequence belongs to the GroES chaperonin family. Heptamer of 7 subunits arranged in a ring. Interacts with the chaperonin GroEL.

The protein resides in the cytoplasm. Its function is as follows. Together with the chaperonin GroEL, plays an essential role in assisting protein folding. The GroEL-GroES system forms a nano-cage that allows encapsulation of the non-native substrate proteins and provides a physical environment optimized to promote and accelerate protein folding. GroES binds to the apical surface of the GroEL ring, thereby capping the opening of the GroEL channel. The sequence is that of Co-chaperonin GroES from Coxiella burnetii (strain Dugway 5J108-111).